We begin with the raw amino-acid sequence, 312 residues long: MNGMNHSVVSEFVFMGLTNSREIQLLLFVFSLLFYFASMMGNLVIVFTVTMDAHLHSPMYFLLANLSIIDMAFCSITAPKMICDIFKKHKAISFRGCITQIFFSHALGGTEMVLLIAMAFDRYMAICKPLHYLTIMSPRMCLYFLATSSIIGLIHSLVQLVFVVDLPFCGPNIFDSFYCDLPRLLRLACTNTQELEFMVTVNSGLISVGSFVLLVISYIFILFTVWKHSSGGLAKALSTLSAHVTVVILFFGPLMFFYTWPSPTSHLDKYLAIFDAFITPFLNPVIYTFRNKDMKVAMRRLCSRLAHFTKIL.

Topologically, residues 1 to 25 (MNGMNHSVVSEFVFMGLTNSREIQL) are extracellular. Asparagine 5 is a glycosylation site (N-linked (GlcNAc...) asparagine). Residues 26–49 (LLFVFSLLFYFASMMGNLVIVFTV) traverse the membrane as a helical segment. The Cytoplasmic portion of the chain corresponds to 50-57 (TMDAHLHS). Residues 58 to 79 (PMYFLLANLSIIDMAFCSITAP) traverse the membrane as a helical segment. The Extracellular segment spans residues 80 to 100 (KMICDIFKKHKAISFRGCITQ). A disulfide bridge connects residues cysteine 97 and cysteine 189. Residues 101 to 120 (IFFSHALGGTEMVLLIAMAF) traverse the membrane as a helical segment. The Cytoplasmic portion of the chain corresponds to 121–139 (DRYMAICKPLHYLTIMSPR). The helical transmembrane segment at 140–158 (MCLYFLATSSIIGLIHSLV) threads the bilayer. Residues 159–195 (QLVFVVDLPFCGPNIFDSFYCDLPRLLRLACTNTQEL) lie on the Extracellular side of the membrane. A helical membrane pass occupies residues 196–219 (EFMVTVNSGLISVGSFVLLVISYI). The Cytoplasmic segment spans residues 220–235 (FILFTVWKHSSGGLAK). Residues 236 to 258 (ALSTLSAHVTVVILFFGPLMFFY) traverse the membrane as a helical segment. The Extracellular segment spans residues 259–269 (TWPSPTSHLDK). The chain crosses the membrane as a helical span at residues 270–289 (YLAIFDAFITPFLNPVIYTF). Residues 290–312 (RNKDMKVAMRRLCSRLAHFTKIL) are Cytoplasmic-facing.

This sequence belongs to the G-protein coupled receptor 1 family.

Its subcellular location is the cell membrane. Functionally, odorant receptor. The sequence is that of Olfactory receptor 4F15 (OR4F15) from Homo sapiens (Human).